Here is a 1813-residue protein sequence, read N- to C-terminus: U3 small nucleolar RNA-associated protein 10 (1813 aa).

5 HEAT repeats span residues 245 to 283, 389 to 427, 428 to 464, 584 to 621, and 659 to 695; these read DVLIRILPVLNDAFMLRKAPQLVVGCYMLCVVLANKASL, SETIEALTILLQAFSDLQRQGLVADGMGKQLSDLLLQFN, ESDTLAPLLRKAIENAGVDITQLEMTLETVLQADIMP, ADMQGILPYIISALADPSERVRREAAALLSLIDRLASK, and IIHHALMPALEEYVLDPDQVGRTLTQVIRGPRSQDDS. Disordered stretches follow at residues 686-705 and 887-912; these read IRGPRSQDDSDRTRSESTGV and DLGSRGPPSKKRRTSQNNMVPMSSMD. Basic and acidic residues predominate over residues 690-705; it reads RSQDDSDRTRSESTGV. HEAT repeat units lie at residues 1058 to 1095, 1189 to 1228, 1265 to 1302, 1309 to 1347, 1398 to 1437, 1678 to 1715, and 1769 to 1806; these read QTIDQVVPPLVQSLRNQKRDVVSGTSELLLSFTTAFEH, KIAVDLLQALSHLLKFTSLRTKMSECFDSGTEQQVDKAHG, LSLVDFVDTIEVLLQRPSDDLRRKVIKLLENRLDSSND, ARVLSFLTVLINILETSPDILLKHAAVACIEKIGEKYGK, EALPRAIDLLRDTLAASDDDSQLHDAVYSLISALLIHVPW, LASISEPLIKQLSMATNSPTLDLVAAEAIPTIVELAVA, and ALLPEMLPYISELLEDDDENVEREVRRWVLSIEDILGE.

This sequence belongs to the HEATR1/UTP10 family. In terms of assembly, component of the ribosomal small subunit (SSU) processome.

It is found in the nucleus. It localises to the nucleolus. Involved in nucleolar processing of pre-18S ribosomal RNA. Involved in ribosome biosynthesis. This is U3 small nucleolar RNA-associated protein 10 from Coccidioides immitis (strain RS) (Valley fever fungus).